A 361-amino-acid chain; its full sequence is MTSPCSFPLKPTISPIIHETPDTNIPPPLPLNPPDLALPSPPCSLHTSISSPLPPPPPPPAPPPPPPPPPLPSAVEPVLPHVYGLKNSQLLKEALEKAGPAPKGKEDVKRLLKLHKDRFRSDLQWILFCADLPSCIQEGPQCGLVALWMAEALLSTPDSVSLERLVQVAKERGYTAQGEMFSVADMAKLAQETLDCQAELLCGGLGGPNRERVLQHLITGHPLLIPYDEDFNHEPCQKKGHKAHWAVSAGVLIGVQNVPSPGYIEDSELPGLFHPVPGAPHQPPSFPEESSPGALFLLSKQGKSWHYQLWDYSQVRESNLQLTDFSPARAADGQVYVVPAGGVEAGLCGQALLLRPQEGSH.

A disordered region spans residues 1 to 75; the sequence is MTSPCSFPLK…PPPPPLPSAV (75 aa). Pro residues-rich tracts occupy residues 24-33 and 52-72; these read NIPPPLPLNP and PLPP…PPLP. The peptidase C39-like stretch occupies residues 134 to 254; the sequence is SCIQEGPQCG…WAVSAGVLIG (121 aa). Cys-142 is a catalytic residue.

The protein belongs to the ACTMAP family. As to quaternary structure, interacts (via N-terminus) with PFN2 isoforms 1/IIa and 2/IIb; the interactions may facilitate efficient cleavage of the acetylated N-terminus of immature actin. Interacts with PFN1.

It is found in the cytoplasm. It catalyses the reaction N-terminal N(alpha)-acetyl-L-methionyl-L-aspartyl-[protein] + H2O = N-terminal L-aspartyl-[protein] + N-acetyl-L-methionine. It carries out the reaction N-terminal N(alpha)-acetyl-L-methionyl-L-glutamyl-[protein] + H2O = N-terminal L-glutamyl-[protein] + N-acetyl-L-methionine. The enzyme catalyses N-terminal N(alpha)-acetyl-L-cysteinyl-L-aspartyl-[protein] + H2O = N-terminal L-aspartyl-[protein] + N-acetyl-L-cysteine. The catalysed reaction is N-terminal N(alpha)-acetyl-L-cysteinyl-L-glutamyl-[protein] + H2O = N-terminal L-glutamyl-[protein] + N-acetyl-L-cysteine. Its function is as follows. Actin maturation protease that specifically mediates the cleavage of immature acetylated N-terminal actin, thereby contributing to actin maturation. Cleaves N-terminal acetylated methionine of immature cytoplasmic beta- and gamma-actins Actb and Actg1 after translation. Cleaves N-terminal acetylated cysteine of muscle alpha-actins Acta1, Actc1 and Acta2 after canonical removal of N-terminal methionine. The polypeptide is Actin maturation protease (Mus musculus (Mouse)).